Here is a 164-residue protein sequence, read N- to C-terminus: Proline-rich protein 2 (164 aa).

Residues 1-21 form the signal peptide; that stretch reads MNLKVGIAVLIIALIVPSAQP.

Component of the acid-soluble organic matrix of calcified layers of the shell (at protein level).

Its subcellular location is the secreted. This Lottia gigantea (Giant owl limpet) protein is Proline-rich protein 2.